We begin with the raw amino-acid sequence, 192 residues long: Xanthine phosphoribosyltransferase (192 aa).

2 residues coordinate xanthine: L20 and T26. A127–A131 contributes to the 5-phospho-alpha-D-ribose 1-diphosphate binding site. K155 serves as a coordination point for xanthine.

This sequence belongs to the purine/pyrimidine phosphoribosyltransferase family. Xpt subfamily. In terms of assembly, homodimer.

The protein localises to the cytoplasm. The catalysed reaction is XMP + diphosphate = xanthine + 5-phospho-alpha-D-ribose 1-diphosphate. The protein operates within purine metabolism; XMP biosynthesis via salvage pathway; XMP from xanthine: step 1/1. In terms of biological role, converts the preformed base xanthine, a product of nucleic acid breakdown, to xanthosine 5'-monophosphate (XMP), so it can be reused for RNA or DNA synthesis. In Streptococcus thermophilus, this protein is Xanthine phosphoribosyltransferase.